The following is a 137-amino-acid chain: Large ribosomal subunit protein uL16 (137 aa).

Positions 1-17 (MLQPKRTKFRKQQKGRN) are enriched in basic residues. Residues 1–21 (MLQPKRTKFRKQQKGRNRGQA) form a disordered region.

It belongs to the universal ribosomal protein uL16 family. Part of the 50S ribosomal subunit.

Functionally, binds 23S rRNA and is also seen to make contacts with the A and possibly P site tRNAs. The chain is Large ribosomal subunit protein uL16 from Nitrosococcus oceani (strain ATCC 19707 / BCRC 17464 / JCM 30415 / NCIMB 11848 / C-107).